Reading from the N-terminus, the 216-residue chain is ATP-dependent dethiobiotin synthetase BioD (216 aa).

12–17 contributes to the ATP binding site; the sequence is GVGKSY. Residue Ser16 participates in Mg(2+) binding. Residue Lys37 is part of the active site. Thr41 serves as a coordination point for substrate. 2 residues coordinate Mg(2+): His53 and Glu115. 115–118 is a binding site for ATP; the sequence is EGAG.

Belongs to the dethiobiotin synthetase family. As to quaternary structure, homodimer. Requires Mg(2+) as cofactor.

The protein localises to the cytoplasm. It catalyses the reaction (7R,8S)-7,8-diammoniononanoate + CO2 + ATP = (4R,5S)-dethiobiotin + ADP + phosphate + 3 H(+). The protein operates within cofactor biosynthesis; biotin biosynthesis; biotin from 7,8-diaminononanoate: step 1/2. In terms of biological role, catalyzes a mechanistically unusual reaction, the ATP-dependent insertion of CO2 between the N7 and N8 nitrogen atoms of 7,8-diaminopelargonic acid (DAPA, also called 7,8-diammoniononanoate) to form a ureido ring. The chain is ATP-dependent dethiobiotin synthetase BioD from Wolinella succinogenes (strain ATCC 29543 / DSM 1740 / CCUG 13145 / JCM 31913 / LMG 7466 / NCTC 11488 / FDC 602W) (Vibrio succinogenes).